The sequence spans 282 residues: MAPSAKDLLELFKVKQTALLLVTGVCAYLEGAGKPDPATLVLASLSMFLSIAGTTGFNMVLDADIDSAMFRTRNRPLPARRMSAKDAVLASSAALAAGLAAGVAVNPYVFVAGLLGFLIDIAVYTVLLKRKSPWSVVFGGFAGGMPALGGWAAATGGFGYQGVLLMLLVAVWSSLHIWTLSTYYSEDYRRAGVPMLPAVYGERAGVVASLAAAVAVFLVAFLAFRAGLISAVGFAVAAVPLVLAVAVLLKGLVSGEYREKAYRAFKLVNIFMGLFFVLLVLT.

A run of 8 helical transmembrane segments spans residues 40–60 (LVLA…FNMV), 87–107 (AVLA…AVNP), 108–128 (YVFV…TVLL), 135–157 (SVVF…ATGG), 162–184 (GVLL…STYY), 204–224 (AGVV…FLAF), 228–248 (LISA…VAVL), and 261–281 (AYRA…LLVL).

The protein belongs to the UbiA prenyltransferase family. Protoheme IX farnesyltransferase subfamily.

It localises to the cell membrane. The catalysed reaction is heme b + (2E,6E)-farnesyl diphosphate + H2O = Fe(II)-heme o + diphosphate. The protein operates within porphyrin-containing compound metabolism; heme O biosynthesis; heme O from protoheme: step 1/1. Its function is as follows. Converts heme B (protoheme IX) to heme O by substitution of the vinyl group on carbon 2 of heme B porphyrin ring with a hydroxyethyl farnesyl side group. This Thermofilum pendens (strain DSM 2475 / Hrk 5) protein is Protoheme IX farnesyltransferase.